Consider the following 270-residue polypeptide: Regulatory protein RecX (270 aa).

The protein belongs to the RecX family.

It is found in the cytoplasm. Its function is as follows. Modulates RecA activity. The protein is Regulatory protein RecX of Bacillus cereus (strain G9842).